Here is a 587-residue protein sequence, read N- to C-terminus: F-box/WD repeat-containing protein sel-10 (587 aa).

Positions 1–11 (MWPRNDVHMDD) are enriched in basic and acidic residues. The disordered stretch occupies residues 1-53 (MWPRNDVHMDDGSMTPEDQEPVTDNDMEYNDNGEESSYSNGSSSSYNADKLSS). Acidic residues predominate over residues 17–34 (EDQEPVTDNDMEYNDNGE). The span at 35–47 (ESSYSNGSSSSYN) shows a compositional bias: low complexity. Residues 121-167 (RDFLSCLPVELGMKILHNLTGYDLLKVAQVSKNWKLISEIDKIWKSL) form the F-box domain. WD repeat units follow at residues 253–291 (GHED…VMYT), 294–333 (GHTG…LLHT), 336–373 (GHTS…HLAT), 376–415 (GHHA…RTLT), 416–455 (GHNN…GQEC), 461–498 (GHTS…CVHM), and 501–539 (GHRS…LIRD).

Probable component of the SCF(sel-10) E3 ubiquitin-protein ligase complex which includes skr-1 and F-box domain-containing protein sel-10 as a substrate recognition component. Interacts with fem-1, fem-2, and fem-3. Interacts with the intracellular domain of glp-1 and sel-12. Interacts with lin-12. Interacts with skr-1. Interacts with zyg-1. Expressed in tail and head neurons.

The protein resides in the cell projection. It localises to the axon. It is found in the cytoplasm. Probable substrate recognition component of SCF (SKP1-CUL-F-box protein) E3 ubiquitin-protein ligase complex, which mediates the ubiquitination and subsequent proteasomal degradation of target proteins. Regulates synapse elimination in early development in the motor neuron HSNL. Cell autonomous negative regulator of lin-12/Notch-mediated signaling, with respect to lin-12 activity in cell fate decisions and tumorigenesis. May target the intracellular domains of lin-12/Notch proteins for ubiquitin-dependent degradation. Involved in sex determination by promoting female development. Potential regulator of presenilin. May have a role in egg laying. Regulates zyg-1 levels (possibly redundantly with lin-23) to control centrosome duplication during mitosis. Negatively regulates lin-45 activity and protein stability, probably by targeting it for ubiquitination and proteasomal degradation. This chain is F-box/WD repeat-containing protein sel-10, found in Caenorhabditis elegans.